We begin with the raw amino-acid sequence, 201 residues long: Superoxide dismutase [Mn/Fe] (201 aa).

Fe(3+)-binding residues include His-27, His-81, Asp-162, and His-166. Residues His-27, His-81, Asp-162, and His-166 each contribute to the Mn(2+) site.

This sequence belongs to the iron/manganese superoxide dismutase family. In terms of assembly, homodimer. Mn(2+) is required as a cofactor. Fe(3+) serves as cofactor.

It carries out the reaction 2 superoxide + 2 H(+) = H2O2 + O2. Functionally, destroys superoxide anion radicals which are normally produced within the cells and which are toxic to biological systems. Catalyzes the dismutation of superoxide anion radicals into O2 and H2O2 by successive reduction and oxidation of the transition metal ion at the active site. The protein is Superoxide dismutase [Mn/Fe] (sodA) of Staphylococcus carnosus.